The primary structure comprises 176 residues: MLTLNTRINSADKVSAQLVLPYESRENSRLRTALSSGEEVAIFIPRGTVLRHNDLLMGDDGRVVQIVAARESTYRITCANPHDLLRCAFHLGNRHTQTQVGEGFLRIARDNVLKEMLEGLGATVIEEDAQFEPEAGAYGSGGHHHHGESSQGHAHGPLAPIPVHQKIHRPSDIPSR.

The tract at residues 134–176 (EAGAYGSGGHHHHGESSQGHAHGPLAPIPVHQKIHRPSDIPSR) is disordered.

It belongs to the UreE family.

Its subcellular location is the cytoplasm. Its function is as follows. Involved in urease metallocenter assembly. Binds nickel. Probably functions as a nickel donor during metallocenter assembly. The polypeptide is Urease accessory protein UreE (Nitrosospira multiformis (strain ATCC 25196 / NCIMB 11849 / C 71)).